A 203-amino-acid polypeptide reads, in one-letter code: Cupin-domain-containing oxidoreductase fogC (203 aa).

A cupin-like domain region spans residues 105–171; it reads DFAPGVESPL…GNGTLPGRML (67 aa).

It belongs to the virC family.

It functions in the pathway secondary metabolite biosynthesis. Its function is as follows. Cupin-domain-containing oxidoreductase; part of the gene cluster that mediates the biosynthesis of flavoglaucin and congeners (including aspergin, dihydroauroglaucin and auroglaucin), prenylated salicylaldehyde derivatives carrying a saturated or an unsaturated C-7 side chain. The PKS fogA releases the carboxylic acid (8E,10E,12E)-3,5,7-trihydroxytetradeca-8,10,12-trienoic acid as its product, as well as derivatives with one and two double bonds. FogA is indeed able to reduce the initial triketide, thus being at least partially responsible for the differently saturated heptyl side chains of flavoglaucin congeners. The oxidoreductases fogB, fogC and fogD modify the nascent polyketide in fogA-bound form and, together, fogA, fogB, fogC and fogD are necessary for the formation of the aromatic core and the cyclized PKS products are released as salicyl alcohols. In particular, fogB is responsible for oxidation of a hydroxyl group or reduction of remaining double bond(s) at the C-7 residue whereas fogD is probably involved in the reductive release of the modified PKS products. The cytochrome P450 monooxygenase fogE is then responsible for the hydroxylation at C-3 of the benzene ring. The fogE products are substrates of the prenyltransferase fogH and the prenylated benzyl alcohols are subsequently oxidized by the fogF to produce the final aryl aldehydes flavoglaucin and congeners. The short-chain dehydrogenase fogG does not seem to be involved in the biosynthesis of the prenylated salicylaldehyde derivatives. The protein is Cupin-domain-containing oxidoreductase fogC of Aspergillus ruber (strain CBS 135680).